A 361-amino-acid chain; its full sequence is Phospho-N-acetylmuramoyl-pentapeptide-transferase (361 aa).

10 helical membrane-spanning segments follow: residues 28–48 (LAII…IKFL), 74–94 (TMGG…LADL), 99–119 (IWIT…DDYA), 133–153 (SKLL…EYLD), 168–188 (LSLD…VGSS), 203–223 (VPIA…GNLI), 236–256 (TGEL…FLWF), 263–283 (VFMG…ISVI), 288–308 (IVLA…ILQV), and 338–358 (KVVI…LSSL).

The protein belongs to the glycosyltransferase 4 family. MraY subfamily. The cofactor is Mg(2+).

The protein localises to the cell inner membrane. The catalysed reaction is UDP-N-acetyl-alpha-D-muramoyl-L-alanyl-gamma-D-glutamyl-meso-2,6-diaminopimeloyl-D-alanyl-D-alanine + di-trans,octa-cis-undecaprenyl phosphate = di-trans,octa-cis-undecaprenyl diphospho-N-acetyl-alpha-D-muramoyl-L-alanyl-D-glutamyl-meso-2,6-diaminopimeloyl-D-alanyl-D-alanine + UMP. Its pathway is cell wall biogenesis; peptidoglycan biosynthesis. In terms of biological role, catalyzes the initial step of the lipid cycle reactions in the biosynthesis of the cell wall peptidoglycan: transfers peptidoglycan precursor phospho-MurNAc-pentapeptide from UDP-MurNAc-pentapeptide onto the lipid carrier undecaprenyl phosphate, yielding undecaprenyl-pyrophosphoryl-MurNAc-pentapeptide, known as lipid I. In Rickettsia felis (strain ATCC VR-1525 / URRWXCal2) (Rickettsia azadi), this protein is Phospho-N-acetylmuramoyl-pentapeptide-transferase.